The chain runs to 335 residues: Galactosylgalactosylxylosylprotein 3-beta-glucuronosyltransferase 1 (335 aa).

The Cytoplasmic portion of the chain corresponds to 1-6; sequence MPKRRD. The tract at residues 3–5 is essential for transport from endoplasmic reticulum to Golgi apparatus and interaction with SAR1A; the sequence is KRR. The helical; Signal-anchor for type II membrane protein transmembrane segment at 7-27 threads the bilayer; sequence ILAIVLIVLPWTLLVTVWHQS. At 28–335 the chain is on the lumenal side; the sequence is TIAPLLTTHK…KGFTDPTVEI (308 aa). Position 92–94 (92–94) interacts with UDP-alpha-D-glucuronate; sequence PTY. Phosphothreonine occurs at positions 104 and 109. Residue Asp123 coordinates UDP-alpha-D-glucuronate. Asn141 carries an N-linked (GlcNAc...) asparagine glycan. Residues Arg166 and Arg171 each contribute to the UDP-alpha-D-glucuronate site. The N-linked (GlcNAc...) asparagine glycan is linked to Asn185. 196 to 198 serves as a coordination point for UDP-alpha-D-glucuronate; that stretch reads DDD. Asp198 is a binding site for Mn(2+). The interaction with galactose moiety of substrate glycoprotein stretch occupies residues 246–255; that stretch reads FDPHRPFAID. Glu285 (proton donor/acceptor) is an active-site residue. N-linked (GlcNAc...) asparagine glycosylation is present at Asn304. 312–314 is a binding site for UDP-alpha-D-glucuronate; the sequence is HTR.

This sequence belongs to the glycosyltransferase 43 family. Homodimer. Interacts with SAR1A. Mn(2+) is required as a cofactor. In terms of processing, the soluble form derives from the membrane form by proteolytic processing.

It localises to the golgi apparatus membrane. The protein resides in the secreted. It catalyses the reaction 3-O-(beta-D-galactosyl-(1-&gt;3)-beta-D-galactosyl-(1-&gt;4)-beta-D-xylosyl)-L-seryl-[protein] + UDP-alpha-D-glucuronate = 3-O-(beta-D-GlcA-(1-&gt;3)-beta-D-Gal-(1-&gt;3)-beta-D-Gal-(1-&gt;4)-beta-D-Xyl)-L-seryl-[protein] + UDP + H(+). The protein operates within protein modification; protein glycosylation. In terms of biological role, involved in the biosynthesis of L2/HNK-1 carbohydrate epitope on glycoproteins. Can also play a role in glycosaminoglycan biosynthesis. Substrates include asialo-orosomucoid (ASOR), asialo-fetuin, and asialo-neural cell adhesion molecule. Requires sphingomyelin for activity: stearoyl-sphingomyelin was the most effective, followed by palmitoyl-sphingomyelin and lignoceroyl-sphingomyelin. Activity was demonstrated only for sphingomyelin with a saturated fatty acid and not for that with an unsaturated fatty acid, regardless of the length of the acyl group. This chain is Galactosylgalactosylxylosylprotein 3-beta-glucuronosyltransferase 1, found in Canis lupus familiaris (Dog).